The following is a 156-amino-acid chain: uncharacterized protein (156 aa).

Residues 1 to 12 (MSSRFARSNGNP) are compositionally biased toward polar residues. The interval 1 to 27 (MSSRFARSNGNPNHIRKRNHSPDPIGI) is disordered. A Phosphoserine modification is found at serine 21.

It localises to the cytoplasm. The protein localises to the nucleus. This is an uncharacterized protein from Saccharomyces cerevisiae (strain ATCC 204508 / S288c) (Baker's yeast).